Consider the following 422-residue polypeptide: Protein phosphatase methylesterase 1 (422 aa).

The disordered stretch occupies residues 1–27 (MSDMFRKSVLNKLPHLPPTRAPWADES). Catalysis depends on residues Ser-207, Asp-234, and His-371.

The protein belongs to the AB hydrolase superfamily.

It catalyses the reaction [phosphatase 2A protein]-C-terminal L-leucine methyl ester + H2O = [phosphatase 2A protein]-C-terminal L-leucine + methanol + H(+). Its function is as follows. Demethylates proteins that have been reversibly carboxymethylated. Demethylates the phosphatase PP2A catalytic subunit. The chain is Protein phosphatase methylesterase 1 (PPE1) from Cryptococcus neoformans var. neoformans serotype D (strain JEC21 / ATCC MYA-565) (Filobasidiella neoformans).